The following is a 46-amino-acid chain: Acetylajmalan esterase (46 aa).

Asn39 carries an N-linked (GlcNAc...) asparagine glycan.

This sequence belongs to the 'GDSL' lipolytic enzyme family.

It catalyses the reaction 17-O-acetylajmaline + H2O = ajmaline + acetate + H(+). The enzyme catalyses 17-O-acetylnorajmaline + H2O = norajmaline + acetate + H(+). Deacetylates 17-O-acetylajmaline and 17-O-acetylnorajmaline, but is inactive toward other acetylated alkaloids. The sequence is that of Acetylajmalan esterase from Rauvolfia verticillata (Common devil-pepper).